The sequence spans 245 residues: 1-(5-phosphoribosyl)-5-[(5-phosphoribosylamino)methylideneamino] imidazole-4-carboxamide isomerase (245 aa).

Residue D11 is the Proton acceptor of the active site. The active-site Proton donor is D132.

Belongs to the HisA/HisF family.

The protein localises to the cytoplasm. The enzyme catalyses 1-(5-phospho-beta-D-ribosyl)-5-[(5-phospho-beta-D-ribosylamino)methylideneamino]imidazole-4-carboxamide = 5-[(5-phospho-1-deoxy-D-ribulos-1-ylimino)methylamino]-1-(5-phospho-beta-D-ribosyl)imidazole-4-carboxamide. The protein operates within amino-acid biosynthesis; L-histidine biosynthesis; L-histidine from 5-phospho-alpha-D-ribose 1-diphosphate: step 4/9. In Bacillus licheniformis (strain ATCC 14580 / DSM 13 / JCM 2505 / CCUG 7422 / NBRC 12200 / NCIMB 9375 / NCTC 10341 / NRRL NRS-1264 / Gibson 46), this protein is 1-(5-phosphoribosyl)-5-[(5-phosphoribosylamino)methylideneamino] imidazole-4-carboxamide isomerase.